The following is a 507-amino-acid chain: Cytochrome P450 monooxygenase cloA (507 aa).

Residues 15–35 traverse the membrane as a helical segment; sequence WTWILLTTCIALISPLVLKGI. An N-linked (GlcNAc...) asparagine glycan is attached at Asn247. Cys450 serves as a coordination point for heme.

It belongs to the cytochrome P450 family. It depends on heme as a cofactor.

The protein localises to the membrane. Its pathway is alkaloid biosynthesis; ergot alkaloid biosynthesis. Its function is as follows. Cytochrome P450 monooxygenase; part of the gene cluster that mediates the biosynthesis of fungal ergot alkaloid. DmaW catalyzes the first step of ergot alkaloid biosynthesis by condensing dimethylallyl diphosphate (DMAP) and tryptophan to form 4-dimethylallyl-L-tryptophan. The second step is catalyzed by the methyltransferase easF that methylates 4-dimethylallyl-L-tryptophan in the presence of S-adenosyl-L-methionine, resulting in the formation of 4-dimethylallyl-L-abrine. The catalase easC and the FAD-dependent oxidoreductase easE then transform 4-dimethylallyl-L-abrine to chanoclavine-I which is further oxidized by easD in the presence of NAD(+), resulting in the formation of chanoclavine-I aldehyde. Agroclavine dehydrogenase easG then mediates the conversion of chanoclavine-I aldehyde to agroclavine via a non-enzymatic adduct reaction: the substrate is an iminium intermediate that is formed spontaneously from chanoclavine-I aldehyde in the presence of glutathione. The presence of easA is not required to complete this reaction. Further conversion of agroclavine to paspalic acid is a two-step process involving oxidation of agroclavine to elymoclavine and of elymoclavine to paspalic acid, the second step being performed by the elymoclavine oxidase cloA. Paspalic acid is then further converted to D-lysergic acid. Ergopeptines are assembled from D-lysergic acid and three different amino acids by the D-lysergyl-peptide-synthetases composed each of a monomudular and a trimodular nonribosomal peptide synthetase subunit. LpsB and lpsC encode the monomodular subunits responsible for D-lysergic acid activation and incorporation into the ergopeptine backbone. LpsA1 and A2 subunits encode the trimodular nonribosomal peptide synthetase assembling the tripeptide portion of ergopeptines. LpsA1 is responsible for formation of the major ergopeptine, ergotamine, and lpsA2 for alpha-ergocryptine, the minor ergopeptine of the total alkaloid mixture elaborated by C.purpurea. D-lysergyl-tripeptides are assembled by the nonribosomal peptide synthetases and released as N-(D-lysergyl-aminoacyl)-lactams. Cyclolization of the D-lysergyl-tripeptides is performed by the Fe(2+)/2-ketoglutarate-dependent dioxygenase easH which introduces a hydroxyl group into N-(D-lysergyl-aminoacyl)-lactam at alpha-C of the aminoacyl residue followed by spontaneous condensation with the terminal lactam carbonyl group. This chain is Cytochrome P450 monooxygenase cloA, found in Claviceps purpurea (strain 20.1) (Ergot fungus).